Reading from the N-terminus, the 1030-residue chain is Carbamoyl phosphate synthase arginine-specific large chain (1030 aa).

The carboxyphosphate synthetic domain stretch occupies residues Met1 to Glu401. ATP-binding residues include Arg129, Arg169, Gly175, Gly176, Lys208, Ile210, Glu215, Gly241, Val242, His243, Gln284, and Glu298. In terms of domain architecture, ATP-grasp 1 spans Arg133–Val327. Positions 284, 298, and 300 each coordinate Mg(2+). Mn(2+) contacts are provided by Gln284, Glu298, and Asn300. Positions Leu402–Gly548 are oligomerization domain. The carbamoyl phosphate synthetic domain stretch occupies residues Asp549–Trp928. The 189-residue stretch at Tyr675 to Ala863 folds into the ATP-grasp 2 domain. 10 residues coordinate ATP: Arg711, Gln748, Val750, Glu754, Gly779, Val780, His781, Ser782, Gln822, and Glu834. Mg(2+)-binding residues include Gln822, Glu834, and Asn836. The Mn(2+) site is built by Gln822, Glu834, and Asn836. Residues Thr925 to Ser1027 form the MGS-like domain. An allosteric domain region spans residues Ser929–Gln1030.

The protein belongs to the CarB family. Composed of two chains; the small (or glutamine) chain promotes the hydrolysis of glutamine to ammonia, which is used by the large (or ammonia) chain to synthesize carbamoyl phosphate. Tetramer of heterodimers (alpha,beta)4. Mg(2+) serves as cofactor. The cofactor is Mn(2+).

It carries out the reaction hydrogencarbonate + L-glutamine + 2 ATP + H2O = carbamoyl phosphate + L-glutamate + 2 ADP + phosphate + 2 H(+). It catalyses the reaction hydrogencarbonate + NH4(+) + 2 ATP = carbamoyl phosphate + 2 ADP + phosphate + 2 H(+). It participates in amino-acid biosynthesis; L-arginine biosynthesis; carbamoyl phosphate from bicarbonate: step 1/1. Large subunit of the glutamine-dependent carbamoyl phosphate synthetase (CPSase). CPSase catalyzes the formation of carbamoyl phosphate from the ammonia moiety of glutamine, carbonate, and phosphate donated by ATP, constituting the first step of the biosynthetic pathway leading to arginine and/or urea. The large subunit (synthetase) binds the substrates ammonia (free or transferred from glutamine from the small subunit), hydrogencarbonate and ATP and carries out an ATP-coupled ligase reaction, activating hydrogencarbonate by forming carboxy phosphate which reacts with ammonia to form carbamoyl phosphate. This Bacillus subtilis (strain 168) protein is Carbamoyl phosphate synthase arginine-specific large chain.